The sequence spans 327 residues: Serine/threonine-protein phosphatase PP1-beta catalytic subunit (327 aa).

At Ala2 the chain carries N-acetylalanine. 4 residues coordinate Mn(2+): Asp63, His65, Asp91, and Asn123. The Proton donor role is filled by His124. 2 residues coordinate Mn(2+): His172 and His247. A disordered region spans residues 305–327 (QYGGLNSGRPVTPPRTANPPKKR). Thr316 carries the phosphothreonine modification.

The protein belongs to the PPP phosphatase family. PP-1 subfamily. In terms of assembly, PP1 comprises a catalytic subunit, PPP1CA, PPP1CB or PPP1CC, which is folded into its native form by inhibitor 2 and glycogen synthetase kinase 3, and then complexed to one or several targeting or regulatory subunits. The targeting or regulatory subunits determine the substrate specificity of PP1. PPP1R12A, PPP1R12B and PPP1R12C mediate binding to myosin. PPP1R3A (in skeletal muscle), PPP1R3B (in liver), PPP1R3C, PPP1R3D and PPP1R3F (in brain) mediate binding to glycogen. PPP1R15A and PPP1R15B mediate binding to EIF2S1. Part of a complex containing PPP1R15B, PP1 and NCK1/2. Interacts with PPP1R7 and PPP1R12C. Interacts with PPP1R16B. Component of the PTW/PP1 phosphatase complex, composed of PPP1R10/PNUTS, TOX4, WDR82, and PPP1CA or PPP1CB or PPP1CC. Interacts with PPP1R8. Interacts with PPP1R12A and NUAK1; the interaction is direct. Interacts with TRIM28; the interaction is weak. Interacts with FOXP3. Interacts with RRP1B. Interacts with SERPINE1. Interacts with LZTR1. Component of the SHOC2-MRAS-PP1c (SMP) complex consisting of SHOC2, GTP-bound M-Ras/MRAS and the catalytic subunit of protein phosphatase 1 (either PPP1CA, PPP1CB or PPP1CC). SHOC2 and PP1c preferably bind M-Ras/MRAS, but they also bind K-Ras/KRAS, N-Ras/NRAS and H-Ras/HRAS; these interactions are GTP-dependent and both SHOC2 and PP1c are required to form a stable complex. Interacts with SHOC2 in the absence of Ras GTPases. The cofactor is Mn(2+).

It is found in the cytoplasm. The protein resides in the nucleus. It localises to the nucleoplasm. The protein localises to the nucleolus. The enzyme catalyses O-phospho-L-seryl-[protein] + H2O = L-seryl-[protein] + phosphate. It carries out the reaction O-phospho-L-threonyl-[protein] + H2O = L-threonyl-[protein] + phosphate. The catalysed reaction is O-phospho-L-seryl-[myosin light chain] + H2O = L-seryl-[myosin light chain] + phosphate. It catalyses the reaction O-phospho-L-threonyl-[myosin light chain] + H2O = L-threonyl-[myosin light chain] + phosphate. With respect to regulation, inhibited by the toxins okadaic acid, tautomycin and microcystin Leu-Arg. The phosphatase activity of the PPP1R15A-PP1 complex toward EIF2S1 is specifically inhibited by Salubrinal, a drug that protects cells from endoplasmic reticulum stress. Protein phosphatase that associates with over 200 regulatory proteins to form highly specific holoenzymes which dephosphorylate hundreds of biological targets. Protein phosphatase (PP1) is essential for cell division, it participates in the regulation of glycogen metabolism, muscle contractility and protein synthesis. Involved in regulation of ionic conductances and long-term synaptic plasticity. Component of the PTW/PP1 phosphatase complex, which plays a role in the control of chromatin structure and cell cycle progression during the transition from mitosis into interphase. In balance with CSNK1D and CSNK1E, determines the circadian period length, through the regulation of the speed and rhythmicity of PER1 and PER2 phosphorylation. May dephosphorylate CSNK1D and CSNK1E. Core component of the SHOC2-MRAS-PP1c (SMP) holophosphatase complex that regulates the MAPK pathway activation. The SMP complex specifically dephosphorylates the inhibitory phosphorylation at 'Ser-259' of RAF1 kinase, 'Ser-365' of BRAF kinase and 'Ser-214' of ARAF kinase, stimulating their kinase activities. The SMP complex enhances the dephosphorylation activity and substrate specificity of PP1c. In Bos taurus (Bovine), this protein is Serine/threonine-protein phosphatase PP1-beta catalytic subunit (PPP1CB).